We begin with the raw amino-acid sequence, 337 residues long: Heat-inducible transcription repressor HrcA (337 aa).

It belongs to the HrcA family.

Its function is as follows. Negative regulator of class I heat shock genes (grpE-dnaK-dnaJ and groELS operons). Prevents heat-shock induction of these operons. The sequence is that of Heat-inducible transcription repressor HrcA from Arthrobacter sp. (strain FB24).